The chain runs to 442 residues: 6-phospho-alpha-glucosidase 1 (442 aa).

An NAD(+)-binding site is contributed by 6–72 (FSVLIAGGGS…PEVEFLATTD (67 aa)). Substrate is bound by residues arginine 95 and asparagine 149. Cysteine 171 provides a ligand contact to Mn(2+). The Proton donor role is filled by aspartate 172. Histidine 202 contributes to the Mn(2+) binding site. Catalysis depends on tyrosine 265, which acts as the Proton acceptor. Arginine 285 serves as a coordination point for substrate.

It belongs to the glycosyl hydrolase 4 family. Homodimer. May also form homotetramer. It depends on Mn(2+) as a cofactor. Co(2+) serves as cofactor. The cofactor is Ni(2+). Fe(2+) is required as a cofactor. Requires Mg(2+) as cofactor. It depends on NAD(+) as a cofactor.

It carries out the reaction alpha-maltose 6'-phosphate + H2O = D-glucose 6-phosphate + D-glucose. With respect to regulation, is inhibited by EDTA in vitro. Functionally, is probably involved in the catabolism of alpha-glycosides accumulated via a phosphoenolpyruvate-dependent phosphotransferase system (PEP-PTS). Hydrolyzes a wide variety of 6-phospho-alpha-D-glucosides including the five isomeric derivatives of sucrose, i.e. trehalulose-6'-phosphate, turanose-6'-phosphate, maltulose-6'-phosphate, leucrose-6'-phosphate, and palatinose-6'-phosphate, but is not active on sucrose-6-phosphate. Can also hydrolyze maltose-6'-phosphate and methyl-alpha-glucose-6-phosphate, and poorly, trehalose-6-phosphate. Fails to hydrolyze beta-O-linked phosphorylated disaccharides such as cellobiose-6'-phosphate and gentiobiose-6'-phosphate. Does not seem to be involved in maltose catabolism. The protein is 6-phospho-alpha-glucosidase 1 (simA) of Lacticaseibacillus paracasei (strain ATCC 334 / BCRC 17002 / CCUG 31169 / CIP 107868 / KCTC 3260 / NRRL B-441) (Lactobacillus paracasei).